Consider the following 173-residue polypeptide: Crossover junction endodeoxyribonuclease RuvC (173 aa).

Active-site residues include D8, E67, and D139. Positions 8, 67, and 139 each coordinate Mg(2+).

It belongs to the RuvC family. Homodimer which binds Holliday junction (HJ) DNA. The HJ becomes 2-fold symmetrical on binding to RuvC with unstacked arms; it has a different conformation from HJ DNA in complex with RuvA. In the full resolvosome a probable DNA-RuvA(4)-RuvB(12)-RuvC(2) complex forms which resolves the HJ. Requires Mg(2+) as cofactor.

Its subcellular location is the cytoplasm. The enzyme catalyses Endonucleolytic cleavage at a junction such as a reciprocal single-stranded crossover between two homologous DNA duplexes (Holliday junction).. Its function is as follows. The RuvA-RuvB-RuvC complex processes Holliday junction (HJ) DNA during genetic recombination and DNA repair. Endonuclease that resolves HJ intermediates. Cleaves cruciform DNA by making single-stranded nicks across the HJ at symmetrical positions within the homologous arms, yielding a 5'-phosphate and a 3'-hydroxyl group; requires a central core of homology in the junction. The consensus cleavage sequence is 5'-(A/T)TT(C/G)-3'. Cleavage occurs on the 3'-side of the TT dinucleotide at the point of strand exchange. HJ branch migration catalyzed by RuvA-RuvB allows RuvC to scan DNA until it finds its consensus sequence, where it cleaves and resolves the cruciform DNA. This is Crossover junction endodeoxyribonuclease RuvC from Salmonella arizonae (strain ATCC BAA-731 / CDC346-86 / RSK2980).